The chain runs to 940 residues: Isoleucine--tRNA ligase (940 aa).

The 'HIGH' region motif lies at 59-69; that stretch reads PYANGDIHIGH. An L-isoleucyl-5'-AMP-binding site is contributed by glutamate 563. The short motif at 604-608 is the 'KMSKS' region element; sequence KMSKS. Residue lysine 607 coordinates ATP. Residues cysteine 903, cysteine 906, cysteine 923, and cysteine 926 each coordinate Zn(2+).

It belongs to the class-I aminoacyl-tRNA synthetase family. IleS type 1 subfamily. In terms of assembly, monomer. It depends on Zn(2+) as a cofactor.

It is found in the cytoplasm. The enzyme catalyses tRNA(Ile) + L-isoleucine + ATP = L-isoleucyl-tRNA(Ile) + AMP + diphosphate. Catalyzes the attachment of isoleucine to tRNA(Ile). As IleRS can inadvertently accommodate and process structurally similar amino acids such as valine, to avoid such errors it has two additional distinct tRNA(Ile)-dependent editing activities. One activity is designated as 'pretransfer' editing and involves the hydrolysis of activated Val-AMP. The other activity is designated 'posttransfer' editing and involves deacylation of mischarged Val-tRNA(Ile). The sequence is that of Isoleucine--tRNA ligase from Wigglesworthia glossinidia brevipalpis.